Reading from the N-terminus, the 1102-residue chain is Voltage-gated delayed rectifier potassium channel KCNH8 (1102 aa).

Over 1–225 the chain is Cytoplasmic; that stretch reads MPVMKGLLAP…HFSTFKAGWD (225 aa). Positions 18 to 90 constitute a PAS domain; that stretch reads IATRFDGTHS…LQIEKSLEEK (73 aa). Residues 93–145 enclose the PAC domain; it reads FKGEIMFYKKNGAPFWCLLDIVPIKNEKGDVVLFLASFKDITDTKVKITSEDK. A compositionally biased stretch (basic and acidic residues) spans 142–151; sequence SEDKKEDRTK. Residues 142-162 form a disordered region; that stretch reads SEDKKEDRTKGRSRAGSHFDS. The chain crosses the membrane as a helical span at residues 226 to 246; the sequence is WLILLATFYVAVTVPYNVCFI. The Extracellular segment spans residues 247–255; sequence GNEDLSTTR. Residues 256-276 traverse the membrane as a helical segment; it reads STTVSDIAVEILFIIDIILNF. Over 277–298 the chain is Cytoplasmic; sequence RTTYVSKSGQVIFEARSICIHY. Residues 299–319 traverse the membrane as a helical segment; sequence VTTWFIIDLIAALPFDLLYAF. Asparagine 320 carries N-linked (GlcNAc...) asparagine glycosylation. Topologically, residues 320 to 327 are extracellular; that stretch reads NVTVVSLV. Residues 328–348 traverse the membrane as a helical; Voltage-sensor segment; it reads HLLKTVRLLRLLRLLQKLDRY. Over 349–357 the chain is Cytoplasmic; sequence SQHSTIVLT. A helical transmembrane segment spans residues 358–378; the sequence is LLMSMFALLAHWMACIWYVIG. At 379–419 the chain is on the extracellular side; the sequence is KMEREDNSLLKWEVGWLHELGKRLESPYYGNNTLGGPSIRS. N-linked (GlcNAc...) asparagine glycosylation occurs at asparagine 409. An intramembrane region (pore-forming) is located at residues 420-440; the sequence is AYIAALYFTLSSLTSVGFGNV. Residues 434-439 carry the Selectivity filter motif; that stretch reads SVGFGN. Over 441–448 the chain is Extracellular; the sequence is SANTDAEK. The helical transmembrane segment at 449–469 threads the bilayer; it reads IFSICTMLIGALMHALVFGNV. The Cytoplasmic portion of the chain corresponds to 470–1102; the sequence is TAIIQRMYSR…DVKDSKAINV (633 aa). Residues 551 to 668 form a cNMP-binding domain region; sequence LFECASRGCL…HKFVEDIQHD (118 aa). Over residues 684–693 the composition is skewed to polar residues; that stretch reads RLSNKSTVSQ. Disordered stretches follow at residues 684-743, 764-841, and 960-991; these read RLSN…KKTG, HSPI…PEPR, and LVGS…YSPS. A compositionally biased stretch (acidic residues) spans 710–723; that stretch reads VEDEEEEEVEEEET. A compositionally biased stretch (polar residues) spans 724 to 737; sequence TSLSPIYTRGSSVS. The span at 968 to 984 shows a compositional bias: basic and acidic residues; that stretch reads TEAHEQNPADSELHHSP.

It belongs to the potassium channel family. H (Eag) (TC 1.A.1.20) subfamily. Kv12.1/KCNH8 sub-subfamily. As to quaternary structure, the potassium channel is probably composed of a homo- or heterotetrameric complex of pore-forming alpha subunits that can associate with modulating beta subunits.

The protein localises to the membrane. The enzyme catalyses K(+)(in) = K(+)(out). Pore-forming (alpha) subunit of a voltage-gated delayed rectifier potassium channel that mediates outward-rectifying potassium currents. Elicits a slowly activating, non-inactivating and slowly deactivation outwards potassium current at depolarizating voltages from -30 mV to +50mV. Shows no obvious change in the activation rate from different holding potentials. Activation is strongly dependent on the pH of the external solution. The chain is Voltage-gated delayed rectifier potassium channel KCNH8 from Mus musculus (Mouse).